A 236-amino-acid polypeptide reads, in one-letter code: uncharacterized protein (236 aa).

The HTH gntR-type domain maps to 1-69 (MLKYQQIATE…RGSGIFVRKH (69 aa)). The H-T-H motif DNA-binding region spans 29-48 (LETLMAQFEVSKSTITKSLE).

This is an uncharacterized protein from Bacillus subtilis (strain 168).